A 335-amino-acid polypeptide reads, in one-letter code: GTPase Obg (335 aa).

The Obg domain occupies 1–159; that stretch reads MKFVDSAKIS…IELEMELKLM (159 aa). The region spanning 160–323 is the OBG-type G domain; sequence ADVGLVGFPN…LKDELWRQIS (164 aa). Residues 166-173, 191-195, 213-216, 280-283, and 304-306 contribute to the GTP site; these read GFPNAGKS, FTTLV, DIPG, TKMD, and SSV. S173 and T193 together coordinate Mg(2+).

Belongs to the TRAFAC class OBG-HflX-like GTPase superfamily. OBG GTPase family. As to quaternary structure, monomer. The cofactor is Mg(2+).

Its subcellular location is the cytoplasm. An essential GTPase which binds GTP, GDP and possibly (p)ppGpp with moderate affinity, with high nucleotide exchange rates and a fairly low GTP hydrolysis rate. Plays a role in control of the cell cycle, stress response, ribosome biogenesis and in those bacteria that undergo differentiation, in morphogenesis control. The protein is GTPase Obg of Chlorobaculum parvum (strain DSM 263 / NCIMB 8327) (Chlorobium vibrioforme subsp. thiosulfatophilum).